The sequence spans 697 residues: Alpha-1,4-glucan:maltose-1-phosphate maltosyltransferase (697 aa).

K284 is an alpha-maltose 1-phosphate binding site. Residues 286 to 305 form a disordered region; it reads RNNSVTAAPGDVGSPWAIGS. Positions 344 and 379 each coordinate alpha-maltose 1-phosphate. Catalysis depends on D414, which acts as the Nucleophile. N415 serves as a coordination point for alpha-maltose 1-phosphate. Catalysis depends on E443, which acts as the Proton donor. 553-554 lines the alpha-maltose 1-phosphate pocket; sequence KY.

Belongs to the glycosyl hydrolase 13 family. GlgE subfamily. Homodimer.

The enzyme catalyses alpha-maltose 1-phosphate + [(1-&gt;4)-alpha-D-glucosyl](n) = [(1-&gt;4)-alpha-D-glucosyl](n+2) + phosphate. It participates in glycan biosynthesis; glycogen biosynthesis. Its activity is regulated as follows. The transfer reaction from maltose-1-P to glycogen is inhibited by micromolar amounts of inorganic phosphate or arsenate but is only slightly inhibited by millimolar concentrations of glucose-1-P, glucose-6-P, or inorganic pyrophosphate. Is also inhibited by ATP, by 1,4-dideoxy-1,4-imino-D-arabinitol (DIA), but not by isofagomine. Functionally, maltosyltransferase that uses maltose 1-phosphate (M1P) as the sugar donor to elongate linear or branched alpha-(1-&gt;4)-glucans. Is also able to catalyze the reverse reaction in vitro. Cannot use glucose 1-phosphate as substrate. Is involved in a branched alpha-glucan biosynthetic pathway from trehalose, together with TreS, Mak and GlgB. In Mycolicibacterium smegmatis (strain ATCC 700084 / mc(2)155) (Mycobacterium smegmatis), this protein is Alpha-1,4-glucan:maltose-1-phosphate maltosyltransferase (glgE).